Consider the following 131-residue polypeptide: Runt-related transcription factor 2 (131 aa).

Positions 1–10 (MRVGVPPQIP) constitute a Runt domain. The disordered stretch occupies residues 1 to 75 (MRVGVPPQIP…SSTRGTGLPV (75 aa)). Arg-11 carries the asymmetric dimethylarginine modification. Composition is skewed to polar residues over residues 13 to 36 (SLNSAPSPFNPQGQSQITDPRQAQ) and 43 to 70 (YDQSYPSYLSQMTSPSIHSTTPLSSTRG).

As to quaternary structure, heterodimer of an alpha and a beta subunit. The alpha subunit binds DNA as a monomer and through the Runt domain. DNA-binding is increased by heterodimerization. Interacts with XRCC6 (Ku70) and XRCC5 (Ku80). Interacts with CCNB1, KAT6A and KAT6B. Interacts with HIVEP3. Interacts with IFI204. Interaction with SATB2; the interaction results in enhanced DNA binding and transactivation by these transcription factors. Binds to HIPK3. Interacts with FOXO1 (via a C-terminal region); the interaction inhibits RUNX2 transcriptional activity towards BGLAP. This interaction is prevented on insulin or IGF1 stimulation as FOXO1 is exported from the nucleus. Interacts with FOXP3. Interacts with TMEM119. Interacts with OLFM2. Interacts with IPO7; the interaction inhibits RUNX2 nuclear translocation in osteoblasts. Post-translationally, phosphorylated; probably by MAP kinases (MAPK). Phosphorylation by HIPK3 is required for the SPEN/MINT and FGF2 transactivation during osteoblastic differentiation.

It localises to the nucleus. The protein localises to the cytoplasm. Its function is as follows. Transcription factor involved in osteoblastic differentiation and skeletal morphogenesis. Essential for the maturation of osteoblasts and both intramembranous and endochondral ossification. CBF binds to the core site, 5'-PYGPYGGT-3', of a number of enhancers and promoters, including murine leukemia virus, polyomavirus enhancer, T-cell receptor enhancers, osteocalcin, osteopontin, bone sialoprotein, alpha 1(I) collagen, LCK, IL-3 and GM-CSF promoters. Inhibits KAT6B-dependent transcriptional activation. In osteoblasts, supports transcription activation: synergizes with SPEN/MINT to enhance FGFR2-mediated activation of the osteocalcin FGF-responsive element (OCFRE). This chain is Runt-related transcription factor 2 (RUNX2), found in Equus caballus (Horse).